A 242-amino-acid chain; its full sequence is Probable transcriptional regulatory protein XCC3027 (242 aa).

This sequence belongs to the TACO1 family.

Its subcellular location is the cytoplasm. The protein is Probable transcriptional regulatory protein XCC3027 of Xanthomonas campestris pv. campestris (strain ATCC 33913 / DSM 3586 / NCPPB 528 / LMG 568 / P 25).